Here is a 100-residue protein sequence, read N- to C-terminus: Small ribosomal subunit protein uS14c (100 aa).

The protein belongs to the universal ribosomal protein uS14 family. As to quaternary structure, part of the 30S ribosomal subunit.

It localises to the plastid. The protein resides in the chloroplast. In terms of biological role, binds 16S rRNA, required for the assembly of 30S particles. The sequence is that of Small ribosomal subunit protein uS14c from Pyropia yezoensis (Susabi-nori).